We begin with the raw amino-acid sequence, 352 residues long: Alpha-2-HS-glycoprotein (352 aa).

The signal sequence occupies residues 1-18 (MKSLVLLLCFAQLWSCQS). The Cystatin fetuin-A-type 1 domain occupies 19–133 (APQGAGLGFR…QFRVLHAQCH (115 aa)). 6 disulfides stabilise this stretch: cysteine 32–cysteine 343, cysteine 89–cysteine 100, cysteine 114–cysteine 132, cysteine 146–cysteine 149, cysteine 208–cysteine 219, and cysteine 230–cysteine 247. A glycan (N-linked (GlcNAc...) asparagine) is linked at asparagine 99. Phosphoserine is present on serine 134. Position 135 is a phosphothreonine (threonine 135). Serine 138 carries the phosphoserine modification. A Cystatin fetuin-A-type 2 domain is found at 144 to 250 (KFCPRCPILI…EEVSVACKLF (107 aa)). Asparagine 156 and asparagine 176 each carry an N-linked (GlcNAc...) asparagine glycan. Over residues 256-273 (PANANPAGPAPTVGQAAP) the composition is skewed to low complexity. Residues 256-280 (PANANPAGPAPTVGQAAPVAPPAGP) form a disordered region. Phosphoserine is present on residues serine 309, serine 313, serine 316, and serine 318. A disordered region spans residues 319 to 338 (GEVLHSPKVGQPGDAGAAGP). Residues 328 to 338 (GQPGDAGAAGP) show a composition bias toward low complexity.

It belongs to the fetuin family. Post-translationally, undergoes complex post-translational modification involving N-glycosylation, and addition of fucose and sialic acid residues. Phosphorylation occurs at a serine residue. In terms of processing, phosphorylated by FAM20C in the extracellular medium. As to expression, synthesized in liver and secreted by the hepatocytes in the blood.

It is found in the secreted. Functionally, could inhibit both insulin-receptor tyrosine kinase activity and insulin-stimulated receptor autophosphorylation and, concomitantly, antagonize the mitogenic effect of the hormone in cultured rat hepatoma cells. The protein is Alpha-2-HS-glycoprotein (Ahsg) of Rattus norvegicus (Rat).